The primary structure comprises 278 residues: Pca operon regulatory protein (278 aa).

The 61-residue stretch at 31 to 91 (VAGISKGMAI…SDGHYFYLTP (61 aa)) folds into the HTH iclR-type domain. Residues 53–72 (ITMAAEKTGMTRAAARRHLL) constitute a DNA-binding region (H-T-H motif). The IclR-ED domain maps to 106–278 (LPKISQPLLN…ETARELRNIL (173 aa)).

In terms of biological role, activates transcription of the pca operon. This is Pca operon regulatory protein (pcaU) from Acinetobacter baylyi (strain ATCC 33305 / BD413 / ADP1).